Here is a 71-residue protein sequence, read N- to C-terminus: Small ribosomal subunit protein bS18 (71 aa).

The protein belongs to the bacterial ribosomal protein bS18 family. In terms of assembly, part of the 30S ribosomal subunit. Forms a tight heterodimer with protein bS6.

Its function is as follows. Binds as a heterodimer with protein bS6 to the central domain of the 16S rRNA, where it helps stabilize the platform of the 30S subunit. The sequence is that of Small ribosomal subunit protein bS18 from Synechococcus sp. (strain JA-2-3B'a(2-13)) (Cyanobacteria bacterium Yellowstone B-Prime).